Consider the following 527-residue polypeptide: FHA domain-containing protein FhaA (527 aa).

A Phosphothreonine modification is found at T116. A disordered region spans residues 119 to 426; that stretch reads FRARGTVNPD…APGGYSGYGQ (308 aa). Basic and acidic residues predominate over residues 170-188; the sequence is RPDEYYDDRYARPQEDPRG. 2 stretches are compositionally biased toward low complexity: residues 199-209 and 256-266; these read RGGYPPETGGY and YQDQGRGYPDQ. Pro residues predominate over residues 271-283; it reads YPPPYEQRPPVSP. Over residues 284–299 the composition is skewed to low complexity; the sequence is GPAAGYGAPGYDQGYR. The span at 300 to 322 shows a compositional bias: gly residues; sequence QSGGYGPSPGGGQPGYGGYGEYG. Low complexity predominate over residues 345-366; that stretch reads RPAYPDQGGYDQGYQQGATTYG. Positions 455-504 constitute an FHA domain; the sequence is NIIGRGQDAQFRLPDTGVSRRHLEIRWDGQVALLADLNSTNGTTVNNAPV.

In terms of assembly, interacts with (phosphorylated) MviN and (phosphorylated) PknB via the FHA domain. Binds to the PknB juxtamembrane domain with an affinity that is modulated by the degree and the pattern of phosphorylation of this juxtamembrane domain. In terms of processing, phosphorylated by PknB.

Its subcellular location is the cytoplasm. In terms of biological role, regulates cell growth and peptidoglycan synthesis by binding to MviN. May inhibit the late stages of peptidoglycan synthesis. This chain is FHA domain-containing protein FhaA (fhaA), found in Mycobacterium tuberculosis (strain ATCC 25618 / H37Rv).